The primary structure comprises 199 residues: MIQISDKAQTYFRKLIEREGVPGMGVRLSAVDAGTPRADARLEFAEPADLRGDEWAIDCDGFTLYVVAASVPWMDGAEIDYVTQSTGNQQLTIKAPKIKGEAPAESASMVERVRWVVENEINPQLASHGGRVAVQEVSADGVVLLRFGGGCHGCGMADVTLKQGIEKTLMGRVPGVIAVRDATDHATGDAPYIPRDSAA.

[4Fe-4S] cluster is bound by residues cysteine 151 and cysteine 154.

The protein belongs to the NfuA family. Homodimer. The cofactor is [4Fe-4S] cluster.

In terms of biological role, involved in iron-sulfur cluster biogenesis. Binds a 4Fe-4S cluster, can transfer this cluster to apoproteins, and thereby intervenes in the maturation of Fe/S proteins. Could also act as a scaffold/chaperone for damaged Fe/S proteins. The chain is Fe/S biogenesis protein NfuA from Xanthomonas oryzae pv. oryzae (strain PXO99A).